Here is a 237-residue protein sequence, read N- to C-terminus: Ergosterol biosynthesis protein 29 (237 aa).

A helical transmembrane segment spans residues 36–56 (ITLFLIVVGTLAFFNELYITI).

It localises to the endoplasmic reticulum membrane. In terms of biological role, part of the third module of ergosterol biosynthesis pathway that includes the late steps of the pathway. ERG29 regulates the activity of the iron-containing C4-methylsterol oxidase ERG25. The third module or late pathway involves the ergosterol synthesis itself through consecutive reactions that mainly occur in the endoplasmic reticulum (ER) membrane. Firstly, the squalene synthase ERG9 catalyzes the condensation of 2 farnesyl pyrophosphate moieties to form squalene, which is the precursor of all steroids. Squalene synthase is crucial for balancing the incorporation of farnesyl diphosphate (FPP) into sterol and nonsterol isoprene synthesis. Secondly, the squalene epoxidase ERG1 catalyzes the stereospecific oxidation of squalene to (S)-2,3-epoxysqualene, which is considered to be a rate-limiting enzyme in steroid biosynthesis. Then, the lanosterol synthase ERG7 catalyzes the cyclization of (S)-2,3 oxidosqualene to lanosterol, a reaction that forms the sterol core. In the next steps, lanosterol is transformed to zymosterol through a complex process involving various demethylation, reduction and desaturation reactions. The lanosterol 14-alpha-demethylase ERG11 (also known as CYP51) catalyzes C14-demethylation of lanosterol to produce 4,4'-dimethyl cholesta-8,14,24-triene-3-beta-ol, which is critical for ergosterol biosynthesis. The C-14 reductase ERG24 reduces the C14=C15 double bond of 4,4-dimethyl-cholesta-8,14,24-trienol to produce 4,4-dimethyl-cholesta-8,24-dienol. 4,4-dimethyl-cholesta-8,24-dienol is substrate of the C-4 demethylation complex ERG25-ERG26-ERG27 in which ERG25 catalyzes the three-step monooxygenation required for the demethylation of 4,4-dimethyl and 4alpha-methylsterols, ERG26 catalyzes the oxidative decarboxylation that results in a reduction of the 3-beta-hydroxy group at the C-3 carbon to an oxo group, and ERG27 is responsible for the reduction of the keto group on the C-3. ERG28 has a role as a scaffold to help anchor ERG25, ERG26 and ERG27 to the endoplasmic reticulum and ERG29 regulates the activity of the iron-containing C4-methylsterol oxidase ERG25. Then, the sterol 24-C-methyltransferase ERG6 catalyzes the methyl transfer from S-adenosyl-methionine to the C-24 of zymosterol to form fecosterol. The C-8 sterol isomerase ERG2 catalyzes the reaction which results in unsaturation at C-7 in the B ring of sterols and thus converts fecosterol to episterol. The sterol-C5-desaturase ERG3 then catalyzes the introduction of a C-5 double bond in the B ring to produce 5-dehydroepisterol. The C-22 sterol desaturase ERG5 further converts 5-dehydroepisterol into ergosta-5,7,22,24(28)-tetraen-3beta-ol by forming the C-22(23) double bond in the sterol side chain. Finally, ergosta-5,7,22,24(28)-tetraen-3beta-ol is substrate of the C-24(28) sterol reductase ERG4 to produce ergosterol. Plays a role in maintaining mitochondrial and plasma membrane integrity and consequently impacting the iron homeostasis, respiratory metabolism and antioxidant response. This chain is Ergosterol biosynthesis protein 29, found in Saccharomyces cerevisiae (strain ATCC 204508 / S288c) (Baker's yeast).